The following is a 128-amino-acid chain: MANSLAIIADPKTGKTYKREIPSERMSSLIGRKIGEEVDGVFFDLVGYKMKITGGSSVDGFAMRPDLQTQGKKQILVKYTSGYRGKNGIRKRITARGSIIGSDITQINLKITQYGPTPIEEKKDDQQA.

Belongs to the eukaryotic ribosomal protein eS6 family.

In Thermoplasma volcanium (strain ATCC 51530 / DSM 4299 / JCM 9571 / NBRC 15438 / GSS1), this protein is Small ribosomal subunit protein eS6.